A 189-amino-acid polypeptide reads, in one-letter code: Fucolectin-5 (189 aa).

A signal peptide spans 1-31 (MKTCNLTDRMKVKMIMLLFQILAISTLQSDS). Positions 40–189 (QENVAVRGKA…VEVNALLPAN (150 aa)) are F5/8 type C-like. Ca(2+) contacts are provided by D70, N72, and S81. 3 cysteine pairs are disulfide-bonded: C82/C178, C114/C115, and C140/C156. 2 residues coordinate alpha-L-fucose: H84 and R111. Positions 111–113 (RGD) match the Cell attachment site motif. Position 118 (R118) interacts with alpha-L-fucose. The Ca(2+) site is built by C178 and E179.

Belongs to the fucolectin family. Homotrimer. Gill mucous cells.

The protein localises to the secreted. Its function is as follows. Acts as a defensive agent. Recognizes blood group fucosylated oligosaccharides including A, B, H and Lewis B-type antigens. Does not recognize Lewis A antigen and has low affinity for monovalent haptens. The chain is Fucolectin-5 from Anguilla japonica (Japanese eel).